The sequence spans 296 residues: Light-independent protochlorophyllide reductase iron-sulfur ATP-binding protein (296 aa).

Positions 1–11 (MTSTITRKEDG) are enriched in basic and acidic residues. The disordered stretch occupies residues 1-20 (MTSTITRKEDGEGSVQVKQD). ATP contacts are provided by residues 39-44 (GIGKST) and Lys-68. Residue Ser-43 participates in Mg(2+) binding. Residues Cys-124 and Cys-158 each coordinate [4Fe-4S] cluster. 209–210 (NR) contributes to the ATP binding site.

Belongs to the NifH/BchL/ChlL family. Homodimer. Protochlorophyllide reductase is composed of three subunits; ChlL, ChlN and ChlB. It depends on [4Fe-4S] cluster as a cofactor.

The catalysed reaction is chlorophyllide a + oxidized 2[4Fe-4S]-[ferredoxin] + 2 ADP + 2 phosphate = protochlorophyllide a + reduced 2[4Fe-4S]-[ferredoxin] + 2 ATP + 2 H2O. Its pathway is porphyrin-containing compound metabolism; chlorophyll biosynthesis (light-independent). In terms of biological role, component of the dark-operative protochlorophyllide reductase (DPOR) that uses Mg-ATP and reduced ferredoxin to reduce ring D of protochlorophyllide (Pchlide) to form chlorophyllide a (Chlide). This reaction is light-independent. The L component serves as a unique electron donor to the NB-component of the complex, and binds Mg-ATP. The chain is Light-independent protochlorophyllide reductase iron-sulfur ATP-binding protein from Prochlorococcus marinus (strain NATL1A).